Reading from the N-terminus, the 222-residue chain is Ribulose-phosphate 3-epimerase (222 aa).

A substrate-binding site is contributed by serine 7. Histidine 32, aspartate 34, and histidine 65 together coordinate a divalent metal cation. Aspartate 34 acts as the Proton acceptor in catalysis. Residues histidine 65, 141 to 144 (GFSG), 174 to 176 (DGG), and 196 to 197 (GS) each bind substrate. Residue aspartate 174 coordinates a divalent metal cation. The Proton donor role is filled by aspartate 174.

Belongs to the ribulose-phosphate 3-epimerase family. A divalent metal cation serves as cofactor.

It catalyses the reaction D-ribulose 5-phosphate = D-xylulose 5-phosphate. The protein operates within carbohydrate degradation. Functionally, catalyzes the reversible epimerization of D-ribulose 5-phosphate to D-xylulose 5-phosphate. The protein is Ribulose-phosphate 3-epimerase of Aquifex aeolicus (strain VF5).